A 521-amino-acid polypeptide reads, in one-letter code: Cytochrome P450 1A1 (521 aa).

A substrate-binding site is contributed by Phe-229. Cys-463 is a heme binding site.

The protein belongs to the cytochrome P450 family. Heme serves as cofactor.

It localises to the endoplasmic reticulum membrane. The protein resides in the microsome membrane. The enzyme catalyses an organic molecule + reduced [NADPH--hemoprotein reductase] + O2 = an alcohol + oxidized [NADPH--hemoprotein reductase] + H2O + H(+). Its function is as follows. Cytochromes P450 are a group of heme-thiolate monooxygenases. They oxidize a variety of structurally unrelated compounds, including steroids, fatty acids, and xenobiotics. In Chelon saliens (Leaping mullet), this protein is Cytochrome P450 1A1 (cyp1a1).